Consider the following 197-residue polypeptide: Transmembrane 4 L6 family member 5 (197 aa).

Residues 1–9 (MCTGKCARC) lie on the Cytoplasmic side of the membrane. Residues 10–30 (VGLSLITLCLVCIVANALLLV) traverse the membrane as a helical segment. Residues 31-46 (PNGETSWTNTNHLSLQ) are Extracellular-facing. Residues 47–67 (VWLMGGFIGGGLMVLCPGIAA) form a helical membrane-spanning segment. Residues 68–90 (VRAGGKGCCGAGCCGNRCRMLRS) are Cytoplasmic-facing. A helical transmembrane segment spans residues 91–111 (VFSSAFGVLGAIYCLSVSGAG). The tract at residues 91 to 197 (VFSSAFGVLG…DCRKKQDTPH (107 aa)) is interaction with MTOR and CASTOR1. Residues 112-157 (LRNGPRCLMNGEWGYHFEDTAGAYLLNRTLWDRCEAPPRVVPWNVT) are Extracellular-facing. An L-arginine-binding site is contributed by 124–129 (WGYHFE). 2 N-linked (GlcNAc...) asparagine glycosylation sites follow: N138 and N155. Residues 158–178 (LFSLLVAASCLEIVLCGIQLV) form a helical membrane-spanning segment. Topologically, residues 179–197 (NATIGVFCGDCRKKQDTPH) are cytoplasmic.

Belongs to the L6 tetraspanin family. As to quaternary structure, interacts with MTOR; the interaction is positively regulated by arginine and is negatively regulated by leucine. Interacts with SLC38A9. Interacts with SLC7A1; the interaction is negatively regulated by arginine. Interacts with CASTOR1; the interaction is positively regulated by leucine and is negatively regulated by arginine. As to expression, intestine. Overexpressed in pancreatic cancers.

It is found in the lysosome membrane. It localises to the cell membrane. Functionally, acts as a lysosomal membrane arginine sensor. Forms a complex with MTOR and SLC38A9 on lysosomal membranes in an arginine-regulated manner, leading to arginine efflux which enables the activation of mTORC1 which subsequently leads to RPS6KB1 and EIF4EBP1 phosphorylations. Facilitates cell cycle G1/S phase progression and the translocation of the CDK4-CCND1 complex into the nucleus. CDKN1B and RHOA/ROCK signaling activity are involved in TM4SF5-mediated acceleration of G1/S phase progression. In Homo sapiens (Human), this protein is Transmembrane 4 L6 family member 5 (TM4SF5).